A 415-amino-acid polypeptide reads, in one-letter code: Tyrosine--tRNA ligase (415 aa).

Position 34 (tyrosine 34) interacts with L-tyrosine. Residues 39 to 48 (PTADSLHLGH) carry the 'HIGH' region motif. Residues tyrosine 164 and glutamine 168 each contribute to the L-tyrosine site. The 'KMSKS' region motif lies at 226-230 (KFGKS). Lysine 229 serves as a coordination point for ATP. In terms of domain architecture, S4 RNA-binding spans 348-415 (KNIVDFLVDG…KKKYFLGKIK (68 aa)).

It belongs to the class-I aminoacyl-tRNA synthetase family. TyrS type 1 subfamily. Homodimer.

It localises to the cytoplasm. The enzyme catalyses tRNA(Tyr) + L-tyrosine + ATP = L-tyrosyl-tRNA(Tyr) + AMP + diphosphate + H(+). Functionally, catalyzes the attachment of tyrosine to tRNA(Tyr) in a two-step reaction: tyrosine is first activated by ATP to form Tyr-AMP and then transferred to the acceptor end of tRNA(Tyr). The chain is Tyrosine--tRNA ligase from Leuconostoc citreum (strain KM20).